Reading from the N-terminus, the 155-residue chain is Ribonuclease H (155 aa).

The region spanning 4 to 145 (DISKVVIYTD…ADKLAVQGRQ (142 aa)) is the RNase H type-1 domain. Mg(2+) contacts are provided by aspartate 13, glutamate 51, aspartate 73, and aspartate 137.

Belongs to the RNase H family. As to quaternary structure, monomer. Requires Mg(2+) as cofactor.

The protein localises to the cytoplasm. The enzyme catalyses Endonucleolytic cleavage to 5'-phosphomonoester.. Endonuclease that specifically degrades the RNA of RNA-DNA hybrids. This Rickettsia bellii (strain RML369-C) protein is Ribonuclease H.